Here is a 487-residue protein sequence, read N- to C-terminus: MAAAAPASTGSKGVVRQVIGPVLDVEFPAGKLPKILNALRIEGTNTAGEAIGLTAEVQQLLGDHRVRAVAMSGTDGLVRGMEALDTGSPIAVPVGEATLGRIFNVLGEPVDEQGPVNTNVTSPIHREAPKLTELETKPKVFETGIKVIDLLAPYRQGGKIGLFGGAGVGKTVLIQELINNIAKEHGGVSVFGGVGERTREGNDLYEEFKESGVINADDLSKSKVALCYGQMNEPPGARMRVGLSALTMAEHFRDVNKQDVLLFVDNIFRFVQAGSEVSALLGRMPSAVGYQPTLGTDVGALQERVASTLEGSITSIQAVYVPADDLTDPAPATTFAHLDATTVLNRALASKGIYPAVDPLDSTSTMLQPAVVGDEHYRTARAVQSTLQRYKELQDIIAILGLDELSEDDRQTVDRARKIEKFLSQPFFVAEIFTGMPGKYVKLEDTISGFNQILAGDLDSLPEQSFYLVGNIDEVKAKAEKIAAESK.

Gly-164–Thr-171 provides a ligand contact to ATP.

It belongs to the ATPase alpha/beta chains family. F-type ATPases have 2 components, CF(1) - the catalytic core - and CF(0) - the membrane proton channel. CF(1) has five subunits: alpha(3), beta(3), gamma(1), delta(1), epsilon(1). CF(0) has four main subunits: a(1), b(1), b'(1) and c(9-12).

It localises to the cellular thylakoid membrane. The enzyme catalyses ATP + H2O + 4 H(+)(in) = ADP + phosphate + 5 H(+)(out). Functionally, produces ATP from ADP in the presence of a proton gradient across the membrane. The catalytic sites are hosted primarily by the beta subunits. The sequence is that of ATP synthase subunit beta from Synechococcus sp. (strain CC9311).